The following is a 236-amino-acid chain: Probable pseudouridine-5'-phosphatase YKL033W-A (236 aa).

It belongs to the HAD-like hydrolase superfamily.

The catalysed reaction is XMP + H2O = xanthosine + phosphate. It catalyses the reaction psi-UMP + H2O = pseudouridine + phosphate. Nucleotidase with XMP as the best in vitro substrate. Low catalytic efficiencies of YKL033W-A observed with XMP and other substrates suggest that these could be secondary activities for this protein, and its primary substrate is not yet identified. May possess pseudouridine 5'-phosphatase activity and together with dTTP/UTP pyrophosphatase YOR111W might constitute a pathway for the detoxification of pseudouridine 5'-triphosphate (Psi-UTP) and -monophosphate (Psi-UMP). This chain is Probable pseudouridine-5'-phosphatase YKL033W-A, found in Saccharomyces cerevisiae (strain ATCC 204508 / S288c) (Baker's yeast).